Here is a 722-residue protein sequence, read N- to C-terminus: Formin-like protein 16 (722 aa).

4 disordered regions span residues 1-56, 564-606, 635-672, and 690-722; these read MSPV…PMFD, ATED…PSRP, VGSP…HLSH, and PLLV…LRYQ. Residues 22–55 are compositionally biased toward pro residues; that stretch reads PLPPPPPPPMRRSAPSPPPMSGRVPPPPPPPPMF. The FH2 domain maps to 182 to 571; the sequence is FRCPVTKRSS…KAATEDVFGG (390 aa). Pro residues-rich tracts occupy residues 593–605, 638–658, and 709–722; these read IRPP…PPSR, PSPP…PPPM, and APPP…LRYQ.

It belongs to the formin-like family. Class-II subfamily.

The sequence is that of Formin-like protein 16 (FH16) from Arabidopsis thaliana (Mouse-ear cress).